The sequence spans 450 residues: Bifunctional apoptosis regulator (450 aa).

A disordered region spans residues 1–20 (MEEPQKSYVNTMDLERDEPL). Residues 1–140 (MEEPQKSYVN…PNTGRANQQM (140 aa)) lie on the Cytoplasmic side of the membrane. The segment at 34-74 (CHCCYDILVNPTTLNCGHSFCRHCLALWWASSKKTECPECR) adopts an RING-type zinc-finger fold. Residues 141-161 (GGGFFSGVLTALTGVAVVLLV) form a helical membrane-spanning segment. Over 162-331 (YHWSSRESEH…KEPTWKQWRE (170 aa)) the chain is Lumenal. In terms of domain architecture, SAM spans 182 to 249 (WTAEEVVLWL…LMELERVKAL (68 aa)). Residue Asn232 is glycosylated (N-linked (GlcNAc...) asparagine). The helical transmembrane segment at 332–352 (FLVKYSFLPYQLIAEFAWDWL) threads the bilayer. Residues 353–360 (EVHYWTSR) lie on the Cytoplasmic side of the membrane. A helical transmembrane segment spans residues 361–381 (FLIINAMLLSVLELFSFWRIW). Over 382–404 (SRSELKTVPQRMWSHFWKVSTQG) the chain is Lumenal. A helical transmembrane segment spans residues 405 to 425 (LFVAMFWPLIPQFVCNCLFYW). Residues 426–450 (ALYFNPIINIDLVVKELRRLETQVL) are Cytoplasmic-facing.

In terms of assembly, interacts with CASP8, BCL2 and BCL2L1 through SAM domain and also with HIP1, IFT57, ESRRBL1 and BCAP31. Interacts with NGFR; this interaction inhibits NF-kappa-B and JNK-related signaling pathways. In terms of processing, mediates RING-dependent self-ubiquitination leading to proteasomal degradation. In terms of tissue distribution, expressed highly in brain, moderately in small intestine, weakly in testes and only faintly in liver and skeletal muscle. Not expressed in heart, kidney, lung and spleen.

Its subcellular location is the endoplasmic reticulum membrane. It carries out the reaction S-ubiquitinyl-[E2 ubiquitin-conjugating enzyme]-L-cysteine + [acceptor protein]-L-lysine = [E2 ubiquitin-conjugating enzyme]-L-cysteine + N(6)-ubiquitinyl-[acceptor protein]-L-lysine.. In terms of biological role, membrane-bound E3 ubiquitin ligase that plays a role in several processes including apoptosis regulation or reticulum endoplasmic stress. Has anti-apoptotic activity, both for apoptosis triggered via death-receptors and via mitochondrial factors. Contributes to the dynamic control of IRE1/ERN1 signaling during ER stress by inducing BAX inhibitor 1/TMBIM6 proteasomal degradation. Promotes the activation of TGF-beta signaling by mediating the 'Lys-63'-linked ubiquitination of TGFBR1 which is critical to activate the pathway. Together with NGFR, negatively regulates NF-kappa-B and JNK-related signaling pathways. Promotes the proteasome-mediated degradation of PNPLA3, a protein involveld in lipid metabolism. This Homo sapiens (Human) protein is Bifunctional apoptosis regulator (BFAR).